Consider the following 507-residue polypeptide: ATP synthase subunit beta (507 aa).

The segment at 1–22 (MSGLASKAKSRVKSSKGKNSTN) is disordered. ATP is bound at residue 183 to 190 (GGAGVGKT).

The protein belongs to the ATPase alpha/beta chains family. As to quaternary structure, F-type ATPases have 2 components, CF(1) - the catalytic core - and CF(0) - the membrane proton channel. CF(1) has five subunits: alpha(3), beta(3), gamma(1), delta(1), epsilon(1). CF(0) has three main subunits: a(1), b(2) and c(9-12). The alpha and beta chains form an alternating ring which encloses part of the gamma chain. CF(1) is attached to CF(0) by a central stalk formed by the gamma and epsilon chains, while a peripheral stalk is formed by the delta and b chains.

It is found in the cell inner membrane. The catalysed reaction is ATP + H2O + 4 H(+)(in) = ADP + phosphate + 5 H(+)(out). Its function is as follows. Produces ATP from ADP in the presence of a proton gradient across the membrane. The catalytic sites are hosted primarily by the beta subunits. The protein is ATP synthase subunit beta of Ehrlichia chaffeensis (strain ATCC CRL-10679 / Arkansas).